A 520-amino-acid chain; its full sequence is 2-isopropylmalate synthase (520 aa).

The 263-residue stretch at 12 to 274 folds into the Pyruvate carboxyltransferase domain; sequence VVIFDTTLRD…DTGIDTTMLT (263 aa). Mn(2+) is bound by residues D21, H209, H211, and N245. Residues 398–520 are regulatory domain; that stretch reads KLLSLSVIAG…RLHAQHAAVV (123 aa).

It belongs to the alpha-IPM synthase/homocitrate synthase family. LeuA type 1 subfamily. In terms of assembly, homodimer. Requires Mn(2+) as cofactor.

The protein localises to the cytoplasm. The enzyme catalyses 3-methyl-2-oxobutanoate + acetyl-CoA + H2O = (2S)-2-isopropylmalate + CoA + H(+). It participates in amino-acid biosynthesis; L-leucine biosynthesis; L-leucine from 3-methyl-2-oxobutanoate: step 1/4. Catalyzes the condensation of the acetyl group of acetyl-CoA with 3-methyl-2-oxobutanoate (2-ketoisovalerate) to form 3-carboxy-3-hydroxy-4-methylpentanoate (2-isopropylmalate). This is 2-isopropylmalate synthase from Methylorubrum populi (strain ATCC BAA-705 / NCIMB 13946 / BJ001) (Methylobacterium populi).